Here is a 189-residue protein sequence, read N- to C-terminus: MAPTLLLLLPALAGLISVAQGQAFHLGRCPTPPVQENFDVHKYLGRWYEIEKIPVSFEKGNCIQANYSLMENGNIKVLNQELRPDGTVNQIEGQATQSNLTEPAKLGVKFFQLMPTAPYWVLATDYENYALVYSCTTIIWLFHMDHVWILGRNRYLPPETVTYLKDILTANNIDIEKMTVTDQVNCPEF.

Residues 1–21 (MAPTLLLLLPALAGLISVAQG) form the signal peptide. Residue Q22 is modified to Pyrrolidone carboxylic acid. Intrachain disulfides connect C29–C135 and C62–C186. N66 and N99 each carry an N-linked (GlcNAc...) asparagine glycan.

The protein belongs to the calycin superfamily. Lipocalin family. Homodimer. Most heavily expressed in adrenal gland, lung, brain, testis and spleen.

It is found in the secreted. Functionally, APOD occurs in the macromolecular complex with lecithin-transport and binding of bilin. Appears to be able to transport a variety of ligands in a number of different contexts. This chain is Apolipoprotein D (APOD), found in Oryctolagus cuniculus (Rabbit).